Reading from the N-terminus, the 353-residue chain is Alanine racemase (353 aa).

The active-site Proton acceptor; specific for D-alanine is the Lys33. Lys33 carries the post-translational modification N6-(pyridoxal phosphate)lysine. Residue Arg129 coordinates substrate. Residue Tyr250 is the Proton acceptor; specific for L-alanine of the active site. Met298 is a binding site for substrate.

The protein belongs to the alanine racemase family. Pyridoxal 5'-phosphate serves as cofactor.

The catalysed reaction is L-alanine = D-alanine. It participates in amino-acid biosynthesis; D-alanine biosynthesis; D-alanine from L-alanine: step 1/1. Its function is as follows. Catalyzes the interconversion of L-alanine and D-alanine. May also act on other amino acids. This chain is Alanine racemase (alr), found in Aromatoleum aromaticum (strain DSM 19018 / LMG 30748 / EbN1) (Azoarcus sp. (strain EbN1)).